Reading from the N-terminus, the 262-residue chain is Putative protein-methionine-sulfoxide reductase subunit YedZ1 (262 aa).

This sequence belongs to the MsrP family.

Part of the YedY1-YedZ1 system that may repair oxidized proteins containing methionine sulfoxide residues (Met-O). The protein is Putative protein-methionine-sulfoxide reductase subunit YedZ1 of Azospira oryzae (strain ATCC BAA-33 / DSM 13638 / PS) (Dechlorosoma suillum).